The sequence spans 1316 residues: DNA-directed RNA polymerase subunit beta' (1316 aa).

Zn(2+) contacts are provided by Cys60, Cys62, Cys75, and Cys78. Mg(2+) contacts are provided by Asp535, Asp537, and Asp539. Zn(2+)-binding residues include Cys891, Cys968, Cys975, and Cys978.

Belongs to the RNA polymerase beta' chain family. As to quaternary structure, the RNAP catalytic core consists of 2 alpha, 1 beta, 1 beta' and 1 omega subunit. When a sigma factor is associated with the core the holoenzyme is formed, which can initiate transcription. Mg(2+) is required as a cofactor. The cofactor is Zn(2+).

It catalyses the reaction RNA(n) + a ribonucleoside 5'-triphosphate = RNA(n+1) + diphosphate. In terms of biological role, DNA-dependent RNA polymerase catalyzes the transcription of DNA into RNA using the four ribonucleoside triphosphates as substrates. The sequence is that of DNA-directed RNA polymerase subunit beta' from Mycobacterium avium (strain 104).